The following is a 408-amino-acid chain: MAAAAAAARPLVTVQSLEGDMATDQTQTVALPDVMKASIRPDIVTFVHSNISKNSRQPYAVSKKAGHQTSAESWGTGRAVSRIPRVPGGGTHRAGQGAFGNMCRGGRMFAPTKIWRRWHRKINVNQKRYAVVSAIAASAVPSLVLARGHKIETVPELPLVVSDSIEGVEETSAALKVLKQIGAYSDAEKAKDSHSIRPGKGKMRNRRYINRKGPLIVYGTEGAKLVKAFRNIPGIDIINVERLNLLKLAPGGHLGRFVVWTKSAFEKLDSIYGSFDKVSEKKNGYVLPRSKMVNADLARIINSDEVQSVVSPIQEGSKRAPLKKNPLRILNTMLKLNPYAKTARRMSLLAEAERVKAKKEKLDKKRKPISKEEASTIKAAGKAWYQTMISDSDYTEFDNFTKWLGVSQ.

The segment at 58–98 is disordered; the sequence is PYAVSKKAGHQTSAESWGTGRAVSRIPRVPGGGTHRAGQGA.

The protein belongs to the universal ribosomal protein uL4 family.

The polypeptide is Large ribosomal subunit protein uL4 (RPL4) (Prunus armeniaca (Apricot)).